Reading from the N-terminus, the 222-residue chain is Protein-L-isoaspartate O-methyltransferase (222 aa).

Residue Ser-69 is part of the active site.

It belongs to the methyltransferase superfamily. L-isoaspartyl/D-aspartyl protein methyltransferase family.

It is found in the cytoplasm. It carries out the reaction [protein]-L-isoaspartate + S-adenosyl-L-methionine = [protein]-L-isoaspartate alpha-methyl ester + S-adenosyl-L-homocysteine. Functionally, catalyzes the methyl esterification of L-isoaspartyl residues in peptides and proteins that result from spontaneous decomposition of normal L-aspartyl and L-asparaginyl residues. It plays a role in the repair and/or degradation of damaged proteins. This Nitrosomonas eutropha (strain DSM 101675 / C91 / Nm57) protein is Protein-L-isoaspartate O-methyltransferase.